Reading from the N-terminus, the 485-residue chain is AP2-like ethylene-responsive transcription factor TOE2 (485 aa).

Gly residues predominate over residues Gly124–Asp135. Residues Gly124–Tyr161 are disordered. The segment at residues Gln160–Val216 is a DNA-binding region (AP2/ERF).

It belongs to the AP2/ERF transcription factor family. AP2 subfamily.

The protein resides in the nucleus. Its function is as follows. Probably acts as a transcriptional activator. Binds to the GCC-box pathogenesis-related promoter element. May be involved in the regulation of gene expression by stress factors and by components of stress signal transduction pathways. Regulates negatively the transition to flowering time and confers flowering time delay. The sequence is that of AP2-like ethylene-responsive transcription factor TOE2 (TOE2) from Arabidopsis thaliana (Mouse-ear cress).